The sequence spans 467 residues: 3-isopropylmalate dehydratase large subunit (467 aa).

Positions 348, 408, and 411 each coordinate [4Fe-4S] cluster. Positions 417–445 (DQLTPGERSASTSNRNFEGRQGKGGRTHL) are disordered.

The protein belongs to the aconitase/IPM isomerase family. LeuC type 1 subfamily. As to quaternary structure, heterodimer of LeuC and LeuD. It depends on [4Fe-4S] cluster as a cofactor.

It carries out the reaction (2R,3S)-3-isopropylmalate = (2S)-2-isopropylmalate. Its pathway is amino-acid biosynthesis; L-leucine biosynthesis; L-leucine from 3-methyl-2-oxobutanoate: step 2/4. In terms of biological role, catalyzes the isomerization between 2-isopropylmalate and 3-isopropylmalate, via the formation of 2-isopropylmaleate. The protein is 3-isopropylmalate dehydratase large subunit of Saccharopolyspora erythraea (strain ATCC 11635 / DSM 40517 / JCM 4748 / NBRC 13426 / NCIMB 8594 / NRRL 2338).